A 125-amino-acid polypeptide reads, in one-letter code: UPF0102 protein ABO_0585 (125 aa).

This sequence belongs to the UPF0102 family.

This Alcanivorax borkumensis (strain ATCC 700651 / DSM 11573 / NCIMB 13689 / SK2) protein is UPF0102 protein ABO_0585.